The chain runs to 456 residues: 26S proteasome non-ATPase regulatory subunit 12 (456 aa).

Residue Ala-2 is modified to N-acetylalanine. Lys-92 participates in a covalent cross-link: Glycyl lysine isopeptide (Lys-Gly) (interchain with G-Cter in SUMO1); alternate. Lys-92 participates in a covalent cross-link: Glycyl lysine isopeptide (Lys-Gly) (interchain with G-Cter in SUMO2); alternate. Residues Lys-221 and Lys-368 each carry the N6-acetyllysine modification. A PCI domain is found at 242 to 420 (SICKHYRAIY…GIINFQRPKD (179 aa)).

The protein belongs to the proteasome subunit p55 family. Component of the 19S proteasome regulatory particle complex. The 26S proteasome consists of a 20S core particle (CP) and two 19S regulatory subunits (RP). The regulatory particle is made of a lid composed of 9 subunits including PSMD12, a base containing 6 ATPases and few additional components. Interacts with ERCC6.

Functionally, component of the 26S proteasome, a multiprotein complex involved in the ATP-dependent degradation of ubiquitinated proteins. This complex plays a key role in the maintenance of protein homeostasis by removing misfolded or damaged proteins, which could impair cellular functions, and by removing proteins whose functions are no longer required. Therefore, the proteasome participates in numerous cellular processes, including cell cycle progression, apoptosis, or DNA damage repair. The chain is 26S proteasome non-ATPase regulatory subunit 12 (PSMD12) from Homo sapiens (Human).